Reading from the N-terminus, the 90-residue chain is uncharacterized protein (90 aa).

A helical membrane pass occupies residues 32-52; it reads IIINLIPLVLLFAFFCPCIYF.

The protein resides in the membrane. This is an uncharacterized protein from Schizosaccharomyces pombe (strain 972 / ATCC 24843) (Fission yeast).